Here is a 40-residue protein sequence, read N- to C-terminus: VIIYELNLQGTTKAQYSTILKQLRDDIKDPNLXYGXXDYS.

The protein belongs to the ribosome-inactivating protein family. Type 1 RIP subfamily.

The catalysed reaction is Endohydrolysis of the N-glycosidic bond at one specific adenosine on the 28S rRNA.. Ribosome-inactivating protein of type 1, inhibits protein synthesis in animal cells. The polypeptide is Ribosome-inactivating protein saporin-1 (SAP1) (Saponaria officinalis (Common soapwort)).